Consider the following 362-residue polypeptide: uncharacterized protein (362 aa).

7 helical membrane passes run 32–52, 75–95, 106–126, 148–168, 176–196, 287–307, and 329–349; these read GAGWACGVTVVLTPPGTVGAV, FVDAVLLAGGSAYGLAAADGV, VVMLGGVVPIVPGAVIFDLSV, AAVGGQDATVAVGTVGAGVGA, GVGTASITLESGPTVGAVVVV, VFALATGAVEATATADVPVAM, and VLVAVLAAESVAGIPTYCGMF.

The protein belongs to the peptidase S58 family.

It localises to the cell membrane. Functionally, aminopeptidase. This is an uncharacterized protein from Mycobacterium leprae (strain TN).